We begin with the raw amino-acid sequence, 866 residues long: Phospholipase D gamma 3 (866 aa).

One can recognise a C2 domain in the interval 31–170 (PFDTSSGSLR…CSGNRIEGLF (140 aa)). Residue aspartate 232 coordinates Ca(2+). In terms of domain architecture, PLD phosphodiesterase 1 spans 371–406 (TIYTHHQKTMIVDAEAAQNRRKIVAFVGGLDLCNGR). Active-site residues include histidine 376, lysine 378, and aspartate 383. Histidine 376 serves as a coordination point for a 1,2-diacyl-sn-glycero-3-phosphate. Ca(2+) contacts are provided by histidine 412 and histidine 444. Residue glutamine 572 coordinates a 1,2-diacyl-sn-glycero-3-phosphate. Phosphoserine is present on serine 692. The region spanning 712–739 (FMIYVHSKGMVVDDEFVLIGSANINQRS) is the PLD phosphodiesterase 2 domain. Residues histidine 717, lysine 719, and aspartate 724 contribute to the active site. Residue histidine 717 participates in a 1,2-diacyl-sn-glycero-3-phosphate binding. A Ca(2+)-binding site is contributed by glutamate 780.

This sequence belongs to the phospholipase D family. C2-PLD subfamily. The cofactor is Ca(2+). In terms of tissue distribution, highly expressed in inflorescences and old leaves, moderately in stems, roots, siliques and young leaves and low in flowers.

Its subcellular location is the cytoplasm. The protein resides in the membrane. It carries out the reaction a 1,2-diacyl-sn-glycero-3-phosphocholine + H2O = a 1,2-diacyl-sn-glycero-3-phosphate + choline + H(+). Its activity is regulated as follows. Inhibited by neomycin. Hydrolyzes glycerol-phospholipids at the terminal phosphodiesteric bond to generate phosphatidic acids (PA). Plays an important role in various cellular processes, including phytohormone action, vesicular trafficking, secretion, cytoskeletal arrangement, meiosis, tumor promotion, pathogenesis, membrane deterioration and senescence. Can use phosphatidylserine but prefers ethanolamine-containing lipids as substrates. This Arabidopsis thaliana (Mouse-ear cress) protein is Phospholipase D gamma 3.